A 158-amino-acid chain; its full sequence is Small t antigen (158 aa).

The residue at position 1 (Met-1) is an N-acetylmethionine; by host. The 64-residue stretch at 12 to 75 folds into the J domain; it reads RLMHLLKLPM…LPCLSTQDFI (64 aa). The C4-type; atypical zinc-finger motif lies at 95-106; that stretch reads CNFENCNKCLYC. Residues 112–130 form an H1C3-type; atypical zinc finger; the sequence is HKSDPPFPKVWGYCLCYKC.

In terms of assembly, interacts with host PPP2R1A; the interaction inhibits PP2A activity.

The protein resides in the host cytoplasm. It localises to the host nucleus. Functionally, promotes efficient viral genome replication by accelerating both G1 and S phase progression of the cell cycle. Inhibits host PP2A by binding to the A subunit, thereby displacing lower affinity regulatory B subunit. Inactivation of PP2A in turn results in the transactivation of cyclin A and cyclin D1 promoters. Late during the infection cycle, ST may induce dephosphorylation of host MTOR, leading to the inhibition of cap-dependent translation. May establish and maintain high levels of viral genomes during persistent infection in cell culture. This is Small t antigen from Mus musculus (Mouse).